The sequence spans 727 residues: ATP-dependent zinc metalloprotease FtsH (727 aa).

The Cytoplasmic portion of the chain corresponds to 1-6; the sequence is MQKAFR. The helical transmembrane segment at 7–27 threads the bilayer; sequence NVLVIAIIGVIIFGVFSYING. At 28 to 110 the chain is on the extracellular side; that stretch reads NGNTPKQLSY…KVKEEEKQSV (83 aa). Residues 111-131 traverse the membrane as a helical segment; that stretch reads FVSMLTTLIPVLIIAFLFIFF. The Cytoplasmic segment spans residues 132 to 727; sequence LSQAQGGGGG…PNDPNNPSNR (596 aa). 205–212 is an ATP binding site; it reads GPPGTGKT. Histidine 427 contributes to the Zn(2+) binding site. The active site involves glutamate 428. 2 residues coordinate Zn(2+): histidine 431 and aspartate 503. Basic and acidic residues-rich tracts occupy residues 645–684 and 691–706; these read LEEG…DQLR and NDQH…DTGH. The disordered stretch occupies residues 645-727; it reads LEEGKEDMRE…PNDPNNPSNR (83 aa). The span at 710–727 shows a compositional bias: low complexity; the sequence is PNIDKPYNPNDPNNPSNR.

It in the central section; belongs to the AAA ATPase family. In the C-terminal section; belongs to the peptidase M41 family. In terms of assembly, homohexamer. Requires Zn(2+) as cofactor.

The protein localises to the cell membrane. In terms of biological role, acts as a processive, ATP-dependent zinc metallopeptidase for both cytoplasmic and membrane proteins. Plays a role in the quality control of integral membrane proteins. The protein is ATP-dependent zinc metalloprotease FtsH of Staphylococcus haemolyticus (strain JCSC1435).